The sequence spans 305 residues: Phosphatidate cytidylyltransferase (305 aa).

Helical transmembrane passes span 24–44 (LLVF…AFIV), 97–117 (PEHV…HLVF), 124–144 (LGPI…SVPI), 151–171 (LYGF…IFLI), 202–222 (TVVG…IFYS), 232–252 (IAMP…GFFG), and 277–297 (MLDV…ILLI).

Belongs to the CDS family.

The protein resides in the cell membrane. It catalyses the reaction a 1,2-diacyl-sn-glycero-3-phosphate + CTP + H(+) = a CDP-1,2-diacyl-sn-glycerol + diphosphate. The protein operates within phospholipid metabolism; CDP-diacylglycerol biosynthesis; CDP-diacylglycerol from sn-glycerol 3-phosphate: step 3/3. The sequence is that of Phosphatidate cytidylyltransferase (cdsA) from Chlamydia muridarum (strain MoPn / Nigg).